We begin with the raw amino-acid sequence, 187 residues long: Protein GrpE (187 aa).

Residues Met1–Leu38 form a disordered region. A compositionally biased stretch (acidic residues) spans Asn11–Glu34.

Belongs to the GrpE family. In terms of assembly, homodimer.

The protein localises to the cytoplasm. Participates actively in the response to hyperosmotic and heat shock by preventing the aggregation of stress-denatured proteins, in association with DnaK and GrpE. It is the nucleotide exchange factor for DnaK and may function as a thermosensor. Unfolded proteins bind initially to DnaJ; upon interaction with the DnaJ-bound protein, DnaK hydrolyzes its bound ATP, resulting in the formation of a stable complex. GrpE releases ADP from DnaK; ATP binding to DnaK triggers the release of the substrate protein, thus completing the reaction cycle. Several rounds of ATP-dependent interactions between DnaJ, DnaK and GrpE are required for fully efficient folding. In Bacillus subtilis (strain 168), this protein is Protein GrpE.